The chain runs to 742 residues: Conidiogenone synthase (742 aa).

The segment at 1-332 (MGETIADVYA…SLCVPRYFKV (332 aa)) is terpene cyclase. Position 97 (D97) interacts with Mg(2+). Substrate contacts are provided by residues D97, 190–193 (RIVD), N234, 238–242 (SWDKE), and 328–329 (RY). Residues 97–101 (DDETD) carry the DDXXD 1 motif. Residues 234-242 (NDLFSWDKE) carry the NSE/DTE motif. Residues 333–742 (ERNPYKDHLE…LRAMEEASQK (410 aa)) form a prenyltransferase region. K414, R417, and H446 together coordinate isopentenyl diphosphate. Positions 453 and 457 each coordinate Mg(2+). The short motif at 453 to 457 (DDIQD) is the DDXXD 2 element. Residue R462 participates in dimethylallyl diphosphate binding. R463 lines the isopentenyl diphosphate pocket. Residues K539, T540, Q575, N582, K592, and K602 each contribute to the dimethylallyl diphosphate site. The segment at 701–724 (EAHKSDSAWKVNQRRAWKGSQKNG) is disordered.

It in the N-terminal section; belongs to the terpene synthase family. In the C-terminal section; belongs to the FPP/GGPP synthase family. In terms of assembly, hexamer. The cofactor is Mg(2+).

The enzyme catalyses isopentenyl diphosphate + (2E,6E)-farnesyl diphosphate = (2E,6E,10E)-geranylgeranyl diphosphate + diphosphate. The protein operates within secondary metabolite biosynthesis; terpenoid biosynthesis. In terms of biological role, bifunctional terpene synthase; part of the gene cluster that mediates the biosynthesis of conidiogenone, a diterpene known to induce the conidiation. The bifunctional terpene synthase PrDS converts isopentenyl diphosphate (IPP) and dimethylallyl diphosphate (DMAPP) into deoxyconidiogenol. The C-terminal prenyltransferase (PT) domain of PrDS catalyzes formation of GGPP, whereas the N-terminal terpene cyclase (TC) domain catalyzes the cyclization of GGPP into deoxyconidiogenol. The cytochrome P450 monooxygenase PrP450 then catalyzes two rounds of oxidation to furnish conidiogenone. This Penicillium roqueforti (strain FM164) protein is Conidiogenone synthase.